Consider the following 467-residue polypeptide: Trigger factor (467 aa).

A PPIase FKBP-type domain is found at 174 to 261 (SDIAILTFKG…LQDLKTRELP (88 aa)). Residues 439–467 (PKKALNEKVKSSKPKNTQKKTDKTKKDSP) form a disordered region. A compositionally biased stretch (basic and acidic residues) spans 457 to 467 (KKTDKTKKDSP).

It belongs to the FKBP-type PPIase family. Tig subfamily.

It localises to the cytoplasm. The enzyme catalyses [protein]-peptidylproline (omega=180) = [protein]-peptidylproline (omega=0). Functionally, involved in protein export. Acts as a chaperone by maintaining the newly synthesized protein in an open conformation. Functions as a peptidyl-prolyl cis-trans isomerase. The sequence is that of Trigger factor from Prochlorococcus marinus (strain SARG / CCMP1375 / SS120).